The following is a 22-amino-acid chain: Mu-conotoxin SxIIIC (22 aa).

3 disulfides stabilise this stretch: cysteine 3–cysteine 15, cysteine 4–cysteine 21, and cysteine 10–cysteine 22. Position 22 is a cysteine amide (cysteine 22).

The protein belongs to the conotoxin M superfamily. As to expression, expressed by the venom duct.

Its subcellular location is the secreted. Mu-conotoxins block voltage-gated sodium channels (Nav). This toxin potently inhibits hNav1.4/SCN4A (IC(50)=15.11 nM). It also displays lower activities on other human subtypes (Nav1.1/SCN1A; IC(50)=132 nM, Nav1.2/SCN2A; IC(50)=363.8, Nav1.3/SCN3A; IC(50)=89.4, Nav1.6/SCN3A; IC(50)=124.9, Nav1.7/SCN7A; IC(50)=152.2). At Nav1.7/SCN9A, it does not elicit change in channel voltage-dependence of fast inactivation or activation, suggesting it acts as a pore blocker. Interestingly, it blocks current inhibition in an irreversible manner (tested during 35 minutes). In Conus striolatus (Cone snail), this protein is Mu-conotoxin SxIIIC.